The sequence spans 668 residues: Pentatricopeptide repeat-containing protein CRP1, chloroplastic (668 aa).

Residues 1–64 (MPASLLPPTF…SASLTSPSPP (64 aa)) constitute a chloroplast transit peptide. 14 PPR repeats span residues 154–188 (SPLL…DFLP), 189–226 (DLAS…RLEP), 227–261 (DAPL…GLTP), 262–297 (RSNA…EIKP), 298–332 (RTRA…GVAP), 333–367 (DEAT…GVKP), 368–402 (SSYV…GVRP), 403–437 (DRHF…GIEP), 438–472 (DVVT…NCPP), 473–507 (GTTT…GLVP), 508–542 (NIIT…GLKP), 543–577 (SPTM…GLEV), 578–612 (SILV…GLRP), and 613–647 (DVIT…GCAP).

It belongs to the PPR family. P subfamily. In terms of assembly, component of a multisubunit complex.

It is found in the plastid. The protein localises to the chloroplast stroma. In terms of biological role, required for the translation of the chloroplast petA and petD mRNAs. Required for the processing of the petD mRNA from a polycistronic precursor. Binds with high affinity to the 5'-UTR of the chloroplastic petA transcript. Activates psaC and petA translation by binding their 5'-UTRs. This chain is Pentatricopeptide repeat-containing protein CRP1, chloroplastic, found in Zea mays (Maize).